The sequence spans 80 residues: Translation initiation factor IF-1 (80 aa).

The S1-like domain maps to 6 to 80 (EKRKKEESDV…TSRGRIVYRK (75 aa)).

It belongs to the IF-1 family. As to quaternary structure, component of the 30S ribosomal translation pre-initiation complex which assembles on the 30S ribosome in the order IF-2 and IF-3, IF-1 and N-formylmethionyl-tRNA(fMet); mRNA recruitment can occur at any time during PIC assembly.

The protein resides in the cytoplasm. One of the essential components for the initiation of protein synthesis. Stabilizes the binding of IF-2 and IF-3 on the 30S subunit to which N-formylmethionyl-tRNA(fMet) subsequently binds. Helps modulate mRNA selection, yielding the 30S pre-initiation complex (PIC). Upon addition of the 50S ribosomal subunit IF-1, IF-2 and IF-3 are released leaving the mature 70S translation initiation complex. The sequence is that of Translation initiation factor IF-1 from Deinococcus geothermalis (strain DSM 11300 / CIP 105573 / AG-3a).